The chain runs to 438 residues: MQTIYTKITDIKGNLITVEAEGASLGELVQIERADGRSSYASVLRFDARKVTLQVFGGTSGLSTGDKVIFLGRPMEVIYGDSLLGRRFNGTGKPIDHEDECFGEPIPITTPSFNPVCRIVPREMVRTNIPMIDMFNCLVKSQKIPIFSSSGENHNALLMRIAAQTDADIVIIGGMGLTFVDYNFFVEESQRLGFADKCVKFIHKAVDAPVECVLIPDMALACAERFALEQQKNVLVLLTDMTAFADALKEIAITMDQIPANRGYPGSLYSDLAVRYEKAVDIAQGGSITLISVTTMPGDDITHPVPDNTGFITEGQFYLKDNRIDPFGSLSRLKQLVIGKKTREDHGDLANALIRLYADSRKSAERMSMGFKLSNWDKKLLAFSELFEARLMSLEVNIPLEEALDIGWKILSQSFHSEEVGIKEQLIQKYWPKACLHK.

The protein belongs to the ATPase alpha/beta chains family.

Functionally, produces ATP from ADP in the presence of a proton gradient across the membrane. The V-type beta chain is a regulatory subunit. The chain is V-type ATP synthase beta chain from Chlamydia trachomatis serovar L2b (strain UCH-1/proctitis).